We begin with the raw amino-acid sequence, 89 residues long: UPF0223 protein BCG9842_B1176 (89 aa).

This sequence belongs to the UPF0223 family.

The chain is UPF0223 protein BCG9842_B1176 from Bacillus cereus (strain G9842).